We begin with the raw amino-acid sequence, 91 residues long: Small ribosomal subunit protein uS19m (91 aa).

The protein belongs to the universal ribosomal protein uS19 family. Component of the mitochondrial small ribosomal subunit (mt-SSU). Mature yeast 74S mitochondrial ribosomes consist of a small (37S) and a large (54S) subunit. The 37S small subunit contains a 15S ribosomal RNA (15S mt-rRNA) and 34 different proteins. The 54S large subunit contains a 21S rRNA (21S mt-rRNA) and 46 different proteins.

It is found in the mitochondrion. Functionally, component of the mitochondrial ribosome (mitoribosome), a dedicated translation machinery responsible for the synthesis of mitochondrial genome-encoded proteins, including at least some of the essential transmembrane subunits of the mitochondrial respiratory chain. The mitoribosomes are attached to the mitochondrial inner membrane and translation products are cotranslationally integrated into the membrane. This is Small ribosomal subunit protein uS19m (RSM19) from Saccharomyces cerevisiae (strain ATCC 204508 / S288c) (Baker's yeast).